Reading from the N-terminus, the 111-residue chain is Probable 4-amino-4-deoxy-L-arabinose-phosphoundecaprenol flippase subunit ArnE (111 aa).

Helical transmembrane passes span 38-58 (LWLG…LLVL), 61-81 (LPVG…TLAA), and 91-111 (PRHW…GSAA). In terms of domain architecture, EamA spans 40–109 (LGLALICMGA…IISGIIILGS (70 aa)).

The protein belongs to the ArnE family. Heterodimer of ArnE and ArnF.

It localises to the cell inner membrane. It functions in the pathway bacterial outer membrane biogenesis; lipopolysaccharide biosynthesis. Functionally, translocates 4-amino-4-deoxy-L-arabinose-phosphoundecaprenol (alpha-L-Ara4N-phosphoundecaprenol) from the cytoplasmic to the periplasmic side of the inner membrane. The chain is Probable 4-amino-4-deoxy-L-arabinose-phosphoundecaprenol flippase subunit ArnE from Salmonella agona (strain SL483).